A 1774-amino-acid chain; its full sequence is Kinesin-like protein KIF20B (1774 aa).

The region spanning 58-477 is the Kinesin motor domain; sequence YLQVCLRIRP…LKFSTTAQRV (420 aa). Residue 152–159 coordinates ATP; that stretch reads GLTNSGKT. Phosphoserine is present on serine 486. Coiled-coil stretches lie at residues 525 to 601 and 705 to 747; these read EDVL…KIRE and QEAI…LVQA. Over residues 538–555 the composition is skewed to acidic residues; that stretch reads EENEETQNMETELTDEDS. 2 disordered regions span residues 538-557 and 740-799; these read EENE…DSDK and ESNS…PPAK. Positions 741 to 778 are enriched in polar residues; the sequence is SNSLVQALKTSSKVDTSLTSNKSTCNETSEMPKNSRAQ. Positions 779 to 788 are enriched in basic and acidic residues; sequence THSERKRLNE. Residues 824–946 adopt a coiled-coil conformation; it reads SEVVEGNRVL…QMQTKIDELR (123 aa). A Phosphoserine modification is found at serine 950. The interval 1002–1059 is necessary and sufficient for interaction with SHTN1; the sequence is ENSFHASIEAIWEECKEIVKASSKKSHQIQGLEEQIEKLQVEVKGYREENSDLRAQES. Residues 1021 to 1507 are a coiled coil; the sequence is KASSKKSHQI…DEEIQELRKA (487 aa). 2 positions are modified to phosphoserine: serine 1107 and serine 1542. The interval 1514 to 1774 is interaction with PIN1; the sequence is TENQTMNPKP…KRRLRTRTAK (261 aa). Phosphothreonine; by CDK1 is present on threonine 1598. Phosphoserine is present on serine 1612. The segment at 1625–1663 is disordered; it reads KKNSTPRSNVKFPVSEHRNSPVKKEQKVSVGPSSKKTYS. Basic and acidic residues predominate over residues 1638-1651; the sequence is VSEHRNSPVKKEQK. Serine 1669 and serine 1694 each carry phosphoserine.

It belongs to the TRAFAC class myosin-kinesin ATPase superfamily. Kinesin family. Oligomerizes (via kinesin motor domain). Associates with microtubules. Interacts (via C-terminal globular tail region) with PIN1 (via WW domain). Interacts with PRC1. Interacts with SHTN1 (via N-terminus); the interaction is direct and promotes the association of SHTN1 to microtubules in primary neurons. Associates with microtubules. In terms of processing, phosphorylated during mitosis by CDK1. In terms of tissue distribution, expressed in the brain (at protein level).

It is found in the nucleus. Its subcellular location is the cytoplasm. The protein localises to the cytoskeleton. It localises to the microtubule organizing center. The protein resides in the centrosome. It is found in the nucleolus. Its subcellular location is the nucleoplasm. The protein localises to the spindle. It localises to the spindle pole. The protein resides in the midbody. It is found in the cell projection. Its subcellular location is the axon. The protein localises to the growth cone. Plus-end-directed motor enzyme that is required for completion of cytokinesis. Required for proper midbody organization and abscission in polarized cortical stem cells. Plays a role in the regulation of neuronal polarization by mediating the transport of specific cargos. Participates in the mobilization of SHTN1 and in the accumulation of PIP3 in the growth cone of primary hippocampal neurons in a tubulin and actin-dependent manner. In the developing telencephalon, cooperates with SHTN1 to promote both the transition from the multipolar to the bipolar stage and the radial migration of cortical neurons from the ventricular zone toward the superficial layer of the neocortex. Involved in cerebral cortex growth. Acts as an oncogene for promoting bladder cancer cells proliferation, apoptosis inhibition and carcinogenic progression. The chain is Kinesin-like protein KIF20B from Mus musculus (Mouse).